Consider the following 472-residue polypeptide: Ribulose bisphosphate carboxylase large chain (472 aa).

Substrate-binding residues include Asn115 and Thr165. Lys167 (proton acceptor) is an active-site residue. Residue Lys169 participates in substrate binding. Mg(2+) is bound by residues Lys193, Asp195, and Glu196. The residue at position 193 (Lys193) is an N6-carboxylysine. The Proton acceptor role is filled by His286. Positions 287, 319, and 371 each coordinate substrate.

This sequence belongs to the RuBisCO large chain family. Type I subfamily. As to quaternary structure, heterohexadecamer of 8 large chains and 8 small chains. Mg(2+) serves as cofactor.

The enzyme catalyses 2 (2R)-3-phosphoglycerate + 2 H(+) = D-ribulose 1,5-bisphosphate + CO2 + H2O. It carries out the reaction D-ribulose 1,5-bisphosphate + O2 = 2-phosphoglycolate + (2R)-3-phosphoglycerate + 2 H(+). RuBisCO catalyzes two reactions: the carboxylation of D-ribulose 1,5-bisphosphate, the primary event in carbon dioxide fixation, as well as the oxidative fragmentation of the pentose substrate. Both reactions occur simultaneously and in competition at the same active site. The polypeptide is Ribulose bisphosphate carboxylase large chain (Solemya velum gill symbiont).